A 78-amino-acid chain; its full sequence is Small ribosomal subunit protein bS18 (78 aa).

Belongs to the bacterial ribosomal protein bS18 family. As to quaternary structure, part of the 30S ribosomal subunit. Forms a tight heterodimer with protein bS6.

Its function is as follows. Binds as a heterodimer with protein bS6 to the central domain of the 16S rRNA, where it helps stabilize the platform of the 30S subunit. This Geobacillus kaustophilus (strain HTA426) protein is Small ribosomal subunit protein bS18.